The primary structure comprises 342 residues: tRNA N6-adenosine threonylcarbamoyltransferase (342 aa).

The Fe cation site is built by H111 and H115. Substrate-binding positions include 133 to 137 (AVSGG), D166, G179, D183, and N273. D301 serves as a coordination point for Fe cation.

Belongs to the KAE1 / TsaD family. Fe(2+) is required as a cofactor.

The protein resides in the cytoplasm. It catalyses the reaction L-threonylcarbamoyladenylate + adenosine(37) in tRNA = N(6)-L-threonylcarbamoyladenosine(37) in tRNA + AMP + H(+). Required for the formation of a threonylcarbamoyl group on adenosine at position 37 (t(6)A37) in tRNAs that read codons beginning with adenine. Is involved in the transfer of the threonylcarbamoyl moiety of threonylcarbamoyl-AMP (TC-AMP) to the N6 group of A37, together with TsaE and TsaB. TsaD likely plays a direct catalytic role in this reaction. The sequence is that of tRNA N6-adenosine threonylcarbamoyltransferase from Syntrophotalea carbinolica (strain DSM 2380 / NBRC 103641 / GraBd1) (Pelobacter carbinolicus).